Consider the following 102-residue polypeptide: Circadian clock protein KaiB3 (102 aa).

This sequence belongs to the KaiB family. In terms of assembly, purifies as a monomer and homotetramer. Interacts with KaiC1 and KaiC3.

In terms of biological role, a paralog of KaiB1, the major clock oscillator protein in this species. KaiB3 and KaiC3 may cross talk with the core oscillator. The monomer reduces the ATPase activity of KaiC3 by 55%, the homotetramer has no effect. Its function is as follows. A metamorphic protein which may reversibly switch between an inactive tetrameric fold and a rare thioredoxin-like monomeric fold (KaiB(fs)). The protein is Circadian clock protein KaiB3 of Synechocystis sp. (strain ATCC 27184 / PCC 6803 / Kazusa).